The sequence spans 249 residues: Ditrans,polycis-undecaprenyl-diphosphate synthase ((2E,6E)-farnesyl-diphosphate specific) (249 aa).

Asp-18 is a catalytic residue. Position 18 (Asp-18) interacts with Mg(2+). Residues 19 to 22 (GNNR), Phe-23, Lys-31, His-35, and 63 to 65 (SSE) contribute to the substrate site. The active-site Proton acceptor is Asn-66. Residues Trp-67, Arg-69, Arg-186, and 192–194 (RLS) contribute to the substrate site. Glu-205 contacts Mg(2+).

This sequence belongs to the UPP synthase family. Homodimer. Requires Mg(2+) as cofactor.

It carries out the reaction 8 isopentenyl diphosphate + (2E,6E)-farnesyl diphosphate = di-trans,octa-cis-undecaprenyl diphosphate + 8 diphosphate. In terms of biological role, catalyzes the sequential condensation of isopentenyl diphosphate (IPP) with (2E,6E)-farnesyl diphosphate (E,E-FPP) to yield (2Z,6Z,10Z,14Z,18Z,22Z,26Z,30Z,34E,38E)-undecaprenyl diphosphate (di-trans,octa-cis-UPP). UPP is the precursor of glycosyl carrier lipid in the biosynthesis of bacterial cell wall polysaccharide components such as peptidoglycan and lipopolysaccharide. The protein is Ditrans,polycis-undecaprenyl-diphosphate synthase ((2E,6E)-farnesyl-diphosphate specific) of Acinetobacter baylyi (strain ATCC 33305 / BD413 / ADP1).